We begin with the raw amino-acid sequence, 333 residues long: Fructose-1,6-bisphosphatase class 1 1 (333 aa).

Mg(2+)-binding residues include E81, D100, L102, and D103. Residues 103-106 (DGSS) and N191 contribute to the substrate site. E263 serves as a coordination point for Mg(2+).

It belongs to the FBPase class 1 family. Homotetramer. It depends on Mg(2+) as a cofactor.

The protein localises to the cytoplasm. The enzyme catalyses beta-D-fructose 1,6-bisphosphate + H2O = beta-D-fructose 6-phosphate + phosphate. It functions in the pathway carbohydrate biosynthesis; Calvin cycle. This Cereibacter sphaeroides (strain ATCC 17029 / ATH 2.4.9) (Rhodobacter sphaeroides) protein is Fructose-1,6-bisphosphatase class 1 1.